Reading from the N-terminus, the 330-residue chain is Phenylalanine--tRNA ligase alpha subunit (330 aa).

Residue glutamate 257 coordinates Mg(2+).

The protein belongs to the class-II aminoacyl-tRNA synthetase family. Phe-tRNA synthetase alpha subunit type 1 subfamily. In terms of assembly, tetramer of two alpha and two beta subunits. Requires Mg(2+) as cofactor.

It is found in the cytoplasm. The catalysed reaction is tRNA(Phe) + L-phenylalanine + ATP = L-phenylalanyl-tRNA(Phe) + AMP + diphosphate + H(+). The protein is Phenylalanine--tRNA ligase alpha subunit of Nostoc punctiforme (strain ATCC 29133 / PCC 73102).